The sequence spans 118 residues: MISTSNYDVTKDPKFLAFCSLATEGYGQNNTQQSSIGFNEFCEKLEKNAIVKPENKKSTLDLNKSLEDWKLRFTAGGNLSTMDSQVLDVIKKAYNLGMVNKDNMLLRNEAINAYRNSI.

This is SPbeta prophage-derived uncharacterized protein YolB (yolB) from Bacillus subtilis (strain 168).